The following is a 161-amino-acid chain: Nucleotide-binding protein Bpro_1596 (161 aa).

Belongs to the YajQ family.

Its function is as follows. Nucleotide-binding protein. The protein is Nucleotide-binding protein Bpro_1596 of Polaromonas sp. (strain JS666 / ATCC BAA-500).